Here is a 455-residue protein sequence, read N- to C-terminus: Probable glycine dehydrogenase (decarboxylating) subunit 1 (455 aa).

The protein belongs to the GcvP family. N-terminal subunit subfamily. As to quaternary structure, the glycine cleavage system is composed of four proteins: P, T, L and H. In this organism, the P 'protein' is a heterodimer of two subunits.

The enzyme catalyses N(6)-[(R)-lipoyl]-L-lysyl-[glycine-cleavage complex H protein] + glycine + H(+) = N(6)-[(R)-S(8)-aminomethyldihydrolipoyl]-L-lysyl-[glycine-cleavage complex H protein] + CO2. Functionally, the glycine cleavage system catalyzes the degradation of glycine. The P protein binds the alpha-amino group of glycine through its pyridoxal phosphate cofactor; CO(2) is released and the remaining methylamine moiety is then transferred to the lipoamide cofactor of the H protein. This chain is Probable glycine dehydrogenase (decarboxylating) subunit 1, found in Saccharolobus solfataricus (strain ATCC 35092 / DSM 1617 / JCM 11322 / P2) (Sulfolobus solfataricus).